A 120-amino-acid chain; its full sequence is Large ribosomal subunit protein bL12 (120 aa).

Belongs to the bacterial ribosomal protein bL12 family. Homodimer. Part of the ribosomal stalk of the 50S ribosomal subunit. Forms a multimeric L10(L12)X complex, where L10 forms an elongated spine to which 2 to 4 L12 dimers bind in a sequential fashion. Binds GTP-bound translation factors.

In terms of biological role, forms part of the ribosomal stalk which helps the ribosome interact with GTP-bound translation factors. Is thus essential for accurate translation. The sequence is that of Large ribosomal subunit protein bL12 from Listeria monocytogenes serovar 1/2a (strain ATCC BAA-679 / EGD-e).